A 163-amino-acid polypeptide reads, in one-letter code: UPF0260 protein GOX1406 (163 aa).

The protein belongs to the UPF0260 family.

The protein is UPF0260 protein GOX1406 of Gluconobacter oxydans (strain 621H) (Gluconobacter suboxydans).